The sequence spans 658 residues: DNA ligase (658 aa).

Residues D31 to D35, S80 to L81, and E110 contribute to the NAD(+) site. Residue K112 is the N6-AMP-lysine intermediate of the active site. Positions 133, 167, 279, and 303 each coordinate NAD(+). Residues C397, C400, C415, and C420 each coordinate Zn(2+). One can recognise a BRCT domain in the interval D584–E654.

It belongs to the NAD-dependent DNA ligase family. LigA subfamily. It depends on Mg(2+) as a cofactor. Requires Mn(2+) as cofactor.

The enzyme catalyses NAD(+) + (deoxyribonucleotide)n-3'-hydroxyl + 5'-phospho-(deoxyribonucleotide)m = (deoxyribonucleotide)n+m + AMP + beta-nicotinamide D-nucleotide.. DNA ligase that catalyzes the formation of phosphodiester linkages between 5'-phosphoryl and 3'-hydroxyl groups in double-stranded DNA using NAD as a coenzyme and as the energy source for the reaction. It is essential for DNA replication and repair of damaged DNA. The chain is DNA ligase from Mycoplasma pneumoniae (strain ATCC 29342 / M129 / Subtype 1) (Mycoplasmoides pneumoniae).